A 305-amino-acid chain; its full sequence is Nucleotide-binding protein Mpe_A3336 (305 aa).

An ATP-binding site is contributed by 22–29 (GISGSGKS). 74-77 (DVRS) lines the GTP pocket.

This sequence belongs to the RapZ-like family.

Its function is as follows. Displays ATPase and GTPase activities. The sequence is that of Nucleotide-binding protein Mpe_A3336 from Methylibium petroleiphilum (strain ATCC BAA-1232 / LMG 22953 / PM1).